Consider the following 506-residue polypeptide: Flap endonuclease 1 (506 aa).

The segment at 1–106 (MGIKGLIPFL…KTLDKRRQKR (106 aa)) is N-domain. Asp-34 is a Mg(2+) binding site. Positions 47 and 72 each coordinate DNA. The Mg(2+) site is built by Asp-88, Glu-160, Glu-162, Asp-181, and Asp-183. The interval 124–253 (SAKKLVGRTV…KTAYSLVKKY (130 aa)) is I-domain. Glu-160 is a binding site for DNA. Gly-231 and Asp-233 together coordinate DNA. Asp-233 provides a ligand contact to Mg(2+). An interaction with PCNA region spans residues 330 to 338 (IQTSLLSFL). The span at 338–347 (LTNPQPTNKS) shows a compositional bias: polar residues. Residues 338-388 (LTNPQPTNKSKSLDEGPKQSSTEDYKVNTNPSTKGSNVYTTDTNSTKDTKG) form a disordered region. Positions 348–363 (KSLDEGPKQSSTEDYK) are enriched in basic and acidic residues. Residues 364 to 381 (VNTNPSTKGSNVYTTDTN) show a composition bias toward polar residues.

The protein belongs to the XPG/RAD2 endonuclease family. FEN1 subfamily. As to quaternary structure, interacts with PCNA. Three molecules of FEN1 bind to one PCNA trimer with each molecule binding to one PCNA monomer. PCNA stimulates the nuclease activity without altering cleavage specificity. The cofactor is Mg(2+). Phosphorylated. Phosphorylation upon DNA damage induces relocalization to the nuclear plasma.

The protein localises to the nucleus. It localises to the nucleolus. It is found in the nucleoplasm. Its subcellular location is the mitochondrion. Structure-specific nuclease with 5'-flap endonuclease and 5'-3' exonuclease activities involved in DNA replication and repair. During DNA replication, cleaves the 5'-overhanging flap structure that is generated by displacement synthesis when DNA polymerase encounters the 5'-end of a downstream Okazaki fragment. It enters the flap from the 5'-end and then tracks to cleave the flap base, leaving a nick for ligation. Also involved in the long patch base excision repair (LP-BER) pathway, by cleaving within the apurinic/apyrimidinic (AP) site-terminated flap. Acts as a genome stabilization factor that prevents flaps from equilibrating into structures that lead to duplications and deletions. Also possesses 5'-3' exonuclease activity on nicked or gapped double-stranded DNA, and exhibits RNase H activity. Also involved in replication and repair of rDNA and in repairing mitochondrial DNA. The protein is Flap endonuclease 1 of Theileria annulata.